The chain runs to 216 residues: Ribosomal RNA large subunit methyltransferase E (216 aa).

Residues Gly-67, Trp-69, Asp-87, Asp-103, and Asp-128 each coordinate S-adenosyl-L-methionine. The active-site Proton acceptor is Lys-168.

This sequence belongs to the class I-like SAM-binding methyltransferase superfamily. RNA methyltransferase RlmE family.

It is found in the cytoplasm. It carries out the reaction uridine(2552) in 23S rRNA + S-adenosyl-L-methionine = 2'-O-methyluridine(2552) in 23S rRNA + S-adenosyl-L-homocysteine + H(+). Functionally, specifically methylates the uridine in position 2552 of 23S rRNA at the 2'-O position of the ribose in the fully assembled 50S ribosomal subunit. The sequence is that of Ribosomal RNA large subunit methyltransferase E from Acinetobacter baylyi (strain ATCC 33305 / BD413 / ADP1).